The primary structure comprises 171 residues: Neudesin (171 aa).

Positions 1–30 (MARPAPWWRLRLLAALVLALALVPVPSAWA) are cleaved as a signal peptide. Residues 43 to 128 (VRLFTEEELA…KELEALDDVF (86 aa)) enclose the Cytochrome b5 heme-binding domain. Lys-135 bears the N6-acetyllysine mark.

It belongs to the cytochrome b5 family. MAPR subfamily. Interacts with PINK1 and PARK7. As to expression, in the embryo, expressed most abundantly in brain and spinal cord. Widely expressed in adult tissues including brain, heart, lung and kidney. In brain, expressed in neurons but not in glial cells. In the hypothalamus is expressed primarily in the paraventricular nucleus (PVN), with lower levels of expression in the arcuate nucleus (ARC).

The protein localises to the secreted. It is found in the extracellular space. The protein resides in the mitochondrion. It localises to the endoplasmic reticulum. In terms of biological role, acts as a neurotrophic factor in postnatal mature neurons, enhancing neuronal survival. Promotes cell proliferation and neurogenesis in undifferentiated neural pro-genitor cells at the embryonic stage and inhibits differentiation of astrocytes. Its neurotrophic activity is exerted via MAPK1/ERK2, MAPK3/ERK1 and AKT1/AKT pathways. Neurotrophic activity is enhanced by binding to heme. Also acts as an anorexigenic neurotrophic factor that contributes to energy balance. In Mus musculus (Mouse), this protein is Neudesin.